Here is a 336-residue protein sequence, read N- to C-terminus: IgLON family member 5 (336 aa).

The first 30 residues, methionine 1–serine 30, serve as a signal peptide directing secretion. Ig-like C2-type domains are found at residues leucine 33–threonine 122, proline 132–proline 217, and proline 218–leucine 307. N-linked (GlcNAc...) asparagine glycosylation is found at asparagine 41, asparagine 49, asparagine 67, and asparagine 137. An intrachain disulfide couples cysteine 54 to cysteine 112. Intrachain disulfides connect cysteine 154/cysteine 195 and cysteine 238/cysteine 291. N-linked (GlcNAc...) asparagine glycosylation occurs at asparagine 288.

It belongs to the immunoglobulin superfamily. IgLON family.

The protein localises to the secreted. This Homo sapiens (Human) protein is IgLON family member 5 (IGLON5).